Here is a 951-residue protein sequence, read N- to C-terminus: Serine/threonine-protein kinase 10 (951 aa).

The region spanning 36-294 (WEIIGELGDG…AAQLLEHPFV (259 aa)) is the Protein kinase domain. ATP contacts are provided by residues 42–50 (LGDGAFGKV) and K65. D157 serves as the catalytic Proton acceptor. Over residues 319 to 330 (EENGEVEEEEAS) the composition is skewed to acidic residues. Positions 319–479 (EENGEVEEEE…DSGSNSASES (161 aa)) are disordered. Over residues 331-343 (DTPSSNKSVSQSA) the composition is skewed to polar residues. A compositionally biased stretch (basic and acidic residues) spans 345-356 (GEKDKHTGKEHV). A compositionally biased stretch (polar residues) spans 364–373 (PQNTDSQADI). Composition is skewed to basic and acidic residues over residues 374–394 (HSQK…HDAV) and 410–427 (HEPK…EEHG). The span at 429 to 443 (AVSSNQRPKSSQSDR) shows a compositional bias: polar residues. 3 positions are modified to phosphoserine; by PLK1: S483, S487, and S491. Positions 583–723 (EQEMNSKRKF…NKKQQLLRDR (141 aa)) form a coiled coil. A compositionally biased stretch (basic and acidic residues) spans 785–800 (QERARLPKNQKAEAKT). A disordered region spans residues 785–804 (QERARLPKNQKAEAKTRMTM). A coiled-coil region spans residues 898–928 (RENLRPRKKALEDELEHKKEEQEMFFRMNEE). The segment at 930–951 (AGHPFPSNKPAKFYSFSSPEAS) is disordered.

Belongs to the protein kinase superfamily. STE Ser/Thr protein kinase family. STE20 subfamily. Homodimer. Autophosphorylates. Phosphorylated by plk1/plx1, suggesting the existence of a feedback loop with plk1/plx1. activation of the protein.

It is found in the cell membrane. The catalysed reaction is L-seryl-[protein] + ATP = O-phospho-L-seryl-[protein] + ADP + H(+). It catalyses the reaction L-threonyl-[protein] + ATP = O-phospho-L-threonyl-[protein] + ADP + H(+). In terms of biological role, may act as a polo kinase kinase by mediating phosphorylation of plk1/plx1 and subsequent activation of plk1/plx1 during oocyte maturation. The polypeptide is Serine/threonine-protein kinase 10 (stk10) (Xenopus tropicalis (Western clawed frog)).